We begin with the raw amino-acid sequence, 292 residues long: Large ribosomal subunit protein uL4 (292 aa).

2 stretches are compositionally biased toward basic and acidic residues: residues 1–33 (MVEV…DKTA) and 42–51 (KVSDKAESTP). 2 disordered regions span residues 1–59 (MVEV…VKTS) and 132–158 (GTHK…TGKA).

The protein belongs to the universal ribosomal protein uL4 family. Part of the 50S ribosomal subunit.

Its function is as follows. One of the primary rRNA binding proteins, this protein initially binds near the 5'-end of the 23S rRNA. It is important during the early stages of 50S assembly. It makes multiple contacts with different domains of the 23S rRNA in the assembled 50S subunit and ribosome. Functionally, forms part of the polypeptide exit tunnel. This Mycoplasmopsis pulmonis (strain UAB CTIP) (Mycoplasma pulmonis) protein is Large ribosomal subunit protein uL4.